A 319-amino-acid chain; its full sequence is Phenoxybenzoate dioxygenase subunit beta (319 aa).

One can recognise an FAD-binding FR-type domain in the interval 7-109 (MAPVSLRIHA…DGPSNHFALD (103 aa)). 113–223 (PHAVFIAGGI…PARVHLEYFA (111 aa)) lines the NAD(+) pocket. Residues 234-319 (FVVHLARSGR…SKTAELTLDL (86 aa)) form the 2Fe-2S ferredoxin-type domain. Cys-268, Cys-273, Cys-276, and Cys-306 together coordinate [2Fe-2S] cluster.

It belongs to the PDR/VanB family. In terms of assembly, this dioxygenase system consists of two proteins: the alpha subunit (PobA) and a subunit (PobB) that acts as a ferredoxin and a ferredoxin reductase. The cofactor is FMN.

The protein operates within aromatic compound metabolism; carboxydiphenyl ether degradation. In terms of biological role, degrades exclusively diarylether compounds having carboxyl groups in the 3- or 4-position. Yields a hemiacetal that spontaneously hydrolyzes to phenol and protocatechuate. In Ectopseudomonas oleovorans (Pseudomonas oleovorans), this protein is Phenoxybenzoate dioxygenase subunit beta (pobB).